Consider the following 309-residue polypeptide: Glutaminase (309 aa).

The substrate site is built by S65, N117, E162, N169, Y193, Y245, and V263.

This sequence belongs to the glutaminase family. As to quaternary structure, homotetramer.

The enzyme catalyses L-glutamine + H2O = L-glutamate + NH4(+). The polypeptide is Glutaminase (Bacillus cereus (strain ATCC 10987 / NRS 248)).